Reading from the N-terminus, the 190-residue chain is Secreted isochorismatase effector Isc1 (190 aa).

Catalysis depends on residues Asp-26, Lys-100, and Cys-133.

It belongs to the isochorismatase family.

The protein resides in the secreted. It is found in the host cytoplasm. Its subcellular location is the host nucleus. The catalysed reaction is isochorismate + H2O = (2S,3S)-2,3-dihydroxy-2,3-dihydrobenzoate + pyruvate. Functionally, secreted isochorismatase required for full virulence of V.dahliae. Suppresses salicylate-mediated innate immunity of the host by disrupting the plant salicylate metabolism pathway via hydrolysis of its isochorismate precursor. This chain is Secreted isochorismatase effector Isc1, found in Verticillium dahliae (strain VdLs.17 / ATCC MYA-4575 / FGSC 10137) (Verticillium wilt).